Reading from the N-terminus, the 117-residue chain is UPF0122 protein Dred_2057 (117 aa).

It belongs to the UPF0122 family.

Might take part in the signal recognition particle (SRP) pathway. This is inferred from the conservation of its genetic proximity to ftsY/ffh. May be a regulatory protein. This is UPF0122 protein Dred_2057 from Desulforamulus reducens (strain ATCC BAA-1160 / DSM 100696 / MI-1) (Desulfotomaculum reducens).